Here is a 710-residue protein sequence, read N- to C-terminus: PWWP domain-containing DNA repair factor 3A (710 aa).

The tract at residues 106–160 (QESSAGTGRADRSLRGKPMEHVSSPCDSNSSSLPRGDVLGSSRPHRRRPCVQQSL) is disordered. The span at 114–125 (RADRSLRGKPME) shows a compositional bias: basic and acidic residues. Positions 128–137 (SSPCDSNSSS) are enriched in low complexity. Ser-161 carries the post-translational modification Phosphoserine. 2 disordered regions span residues 177-204 (KKGL…ESGS) and 230-398 (NGSS…EEPP). A compositionally biased stretch (low complexity) spans 288-297 (PSACSEPGEC). Residues Ser-374 and Ser-375 each carry the phosphoserine modification. The segment covering 375–385 (SEESMGSNSMR) has biased composition (polar residues). Residues 411–472 (VGMLVWHKHK…KHFDCKEKQT (62 aa)) enclose the PWWP domain.

This sequence belongs to the PWWP3A family. Interacts with TP53BP1 (via BRCT domain); the interaction is not dependent on its phosphorylation status. Binds nucleosomes. Interacts with trimethylated 'Lys-36' of histone H3 (H3K36me3) (in vitro).

The protein resides in the nucleus. Functionally, involved in the DNA damage response pathway by contributing to the maintenance of chromatin architecture. Recruited to the vicinity of DNA breaks by TP53BP1 and plays an accessory role to facilitate damage-induced chromatin changes and promoting chromatin relaxation. Required for efficient DNA repair and cell survival following DNA damage. In Homo sapiens (Human), this protein is PWWP domain-containing DNA repair factor 3A.